Here is a 353-residue protein sequence, read N- to C-terminus: Probable tRNA pseudouridine synthase B (353 aa).

The active-site Nucleophile is D45. The PUA domain occupies 211 to 287 (YPKIVAKKSA…DHIFVEAKHG (77 aa)). The tract at residues 292–353 (VRDREKDVQR…TGVHRRPGSH (62 aa)) is disordered. Residues 309-328 (NIRDAAHGPDSRTGRGRKET) show a composition bias toward basic and acidic residues. A compositionally biased stretch (basic residues) spans 336 to 353 (RVRKLQNKTGVHRRPGSH).

This sequence belongs to the pseudouridine synthase TruB family. Type 2 subfamily.

The catalysed reaction is uridine(55) in tRNA = pseudouridine(55) in tRNA. Its function is as follows. Could be responsible for synthesis of pseudouridine from uracil-55 in the psi GC loop of transfer RNAs. The protein is Probable tRNA pseudouridine synthase B of Thermoplasma volcanium (strain ATCC 51530 / DSM 4299 / JCM 9571 / NBRC 15438 / GSS1).